A 315-amino-acid polypeptide reads, in one-letter code: MAGPQALAFGLLLAVVTATLAAAQRDCVCDNYKLATSCSLNEYGECQCTSYGTQNTVICSKLASKCLAMKAEMTHSKSGRRIKPEGAIQNNDGLYDPDCDEQGLFKAKQCNGTATCWCVNTAGVRRTDKDTEITCSERVRTYWIIIELKHKERESPYDHQSLQTALQEAFTSRYKLNQKFIKNIMYENNVITIDLMQNSSQKTQDDVDIADVAYYFEKDVKGESLFHSSKSMDLRVNGEPLDLDPGQTLIYYVDEKAPEFSMQGLTAGIIAVIVVVSLAVIAGIVVLVISTRKKSAKYEKAEIKEMGEIHRELNA.

An N-terminal signal peptide occupies residues 1-23; sequence MAGPQALAFGLLLAVVTATLAAA. Residues 24–266 lie on the Extracellular side of the membrane; that stretch reads QRDCVCDNYK…APEFSMQGLT (243 aa). Intrachain disulfides connect cysteine 27–cysteine 46, cysteine 29–cysteine 59, cysteine 38–cysteine 48, cysteine 66–cysteine 99, cysteine 110–cysteine 116, and cysteine 118–cysteine 135. The region spanning 63 to 135 is the Thyroglobulin type-1 domain; sequence ASKCLAMKAE…RTDKDTEITC (73 aa). The N-linked (GlcNAc...) asparagine glycan is linked to asparagine 111. A glycan (N-linked (GlcNAc...) asparagine) is linked at asparagine 198. Residues 267-289 form a helical membrane-spanning segment; the sequence is AGIIAVIVVVSLAVIAGIVVLVI. The Cytoplasmic segment spans residues 290–315; it reads STRKKSAKYEKAEIKEMGEIHRELNA.

It belongs to the EPCAM family. In terms of assembly, monomer. Interacts with phosphorylated CLDN7. In terms of processing, glycosylation at Asn-198 is crucial for protein stability.

It is found in the lateral cell membrane. The protein resides in the cell junction. Its subcellular location is the tight junction. Functionally, may act as a physical homophilic interaction molecule between intestinal epithelial cells (IECs) and intraepithelial lymphocytes (IELs) at the mucosal epithelium for providing immunological barrier as a first line of defense against mucosal infection. Plays a role in embryonic stem cells proliferation and differentiation. Up-regulates the expression of FABP5, MYC and cyclins A and E. The protein is Epithelial cell adhesion molecule (Epcam) of Mus musculus (Mouse).